The sequence spans 352 residues: Endophilin-A1 (352 aa).

The segment at 1–21 (MSVAGLKKQFHKATQKVSEKV) is membrane-binding amphipathic helix. Residues 1–27 (MSVAGLKKQFHKATQKVSEKVGGAEGT) are disordered. The tract at residues 1–125 (MSVAGLKKQF…EVGEAMRELS (125 aa)) is binds and tubulates liposomes. A BAR domain is found at 18–249 (SEKVGGAEGT…LEERIRQASS (232 aa)). Residues 60 to 87 (PNPASRAKLSMINTMSKIRGQEKGPGYP) are required for dimerization upon membrane association. Residues 181–248 (EELRQALEKF…RLEERIRQAS (68 aa)) adopt a coiled-coil conformation. Positions 245 to 257 (RQASSQPRREYQP) are enriched in basic and acidic residues. Residues 245-289 (RQASSQPRREYQPKPRMSLEFPTGDSTQPNGGLSHTGTPKPSGVQ) are disordered. Residue Ser262 is modified to Phosphoserine. Positions 268-283 (GDSTQPNGGLSHTGTP) are enriched in polar residues. Residues 290 to 349 (MDQPCCRALYDFEPENEGELGFKEGDIITLTNQIDENWYEGMLHGHSGFFPINYVEILVA) enclose the SH3 domain. The residue at position 299 (Tyr299) is a Phosphotyrosine.

It belongs to the endophilin family. As to quaternary structure, monomer; in cytoplasm. Homodimer; when associated with membranes. Interacts with OPHN1. Interacts with SYNJ1. Interacts with DNM1. Interacts with MAP4K3; the interaction appears to regulate MAP4K3-mediated JNK activation. Interacts with PDCD6IP. Interacts with ATXN2. Interacts with ADAM9 and ADAM15 cytoplasmic tails. Interacts with BIN2. Interacts with TMEM108. Interacts with ADGRB2. In terms of tissue distribution, brain, mostly in frontal cortex. Expressed at high level in fetal cerebellum.

It is found in the cytoplasm. The protein resides in the membrane. The protein localises to the early endosome. It localises to the presynapse. Implicated in synaptic vesicle endocytosis. May recruit other proteins to membranes with high curvature. Required for BDNF-dependent dendrite outgrowth. Cooperates with SH3GL2 to mediate BDNF-NTRK2 early endocytic trafficking and signaling from early endosomes. The protein is Endophilin-A1 (SH3GL2) of Homo sapiens (Human).